The following is a 535-amino-acid chain: MRNQDKRAAHKDSEPSTEVNHTASSYQGRQQETGMNLRGIDGNEPTEGSNLLNNNEKMQGTPAEPNHLQRRRQIHACPPRGLLARVITNVTMVILLWAVVWSVTGSECLPGGNLFGIIMLFYCAIIGGKLFGLIKLPTLPPLPPLLGMLLAGFLIRNVPVISDNIQIKHKWSSALRSIALSVILVRAGLGLDSNALKKLKGVCVRLSLGPCLIEACTSAVLAYFLMGLPWQWGFMLGFVLGAVSPAVVVPSMLLLQEGGYGVEKGIPTLLMAAGSFDDILAITGFNTCLGMAFSTGSTVFNVLKGVLEVIIGVVTGLVLGFFIQYFPSSDQDNLVWKRAFLVLGLSVLAVFSSTYFGFPGSGGLCTLVTAFLAGRGWASTKTDVEKVIAVAWDIFQPLLFGLIGAEVLITALRPETIGLCVATLGIAVLIRILVTYLMVCFAGFNIKEKIFISFAWLPKATVQAAIGSVALDTARSHGEKQLEGYGMDVLTVAFLSIIITAPVGSLLIGLLGPRLLQKAEQNKDEEDQGETSIQV.

Positions 1-14 are enriched in basic and acidic residues; the sequence is MRNQDKRAAHKDSE. Positions 1 to 70 are disordered; it reads MRNQDKRAAH…TPAEPNHLQR (70 aa). The Cytoplasmic segment spans residues 1 to 85; the sequence is MRNQDKRAAH…ACPPRGLLAR (85 aa). Composition is skewed to polar residues over residues 16–34 and 46–58; these read STEV…QETG and TEGS…NEKM. The chain crosses the membrane as a helical span at residues 86 to 103; it reads VITNVTMVILLWAVVWSV. The Extracellular segment spans residues 104–112; sequence TGSECLPGG. The chain crosses the membrane as a helical span at residues 113–132; sequence NLFGIIMLFYCAIIGGKLFG. Residues 133-143 are Cytoplasmic-facing; sequence LIKLPTLPPLP. The chain crosses the membrane as a helical span at residues 144-160; the sequence is PLLGMLLAGFLIRNVPV. At 161–170 the chain is on the extracellular side; it reads ISDNIQIKHK. Residues 171–188 form a helical membrane-spanning segment; that stretch reads WSSALRSIALSVILVRAG. The Cytoplasmic portion of the chain corresponds to 189-199; the sequence is LGLDSNALKKL. A helical transmembrane segment spans residues 200 to 226; that stretch reads KGVCVRLSLGPCLIEACTSAVLAYFLM. Topologically, residues 227–232 are extracellular; that stretch reads GLPWQW. A helical transmembrane segment spans residues 233-241; that stretch reads GFMLGFVLG. Residues 242-269 are Cytoplasmic-facing; the sequence is AVSPAVVVPSMLLLQEGGYGVEKGIPTL. 4 residues coordinate Na(+): V243, G274, D277, and D278. A helical membrane pass occupies residues 270–289; that stretch reads LMAAGSFDDILAITGFNTCL. Over 290–299 the chain is Extracellular; that stretch reads GMAFSTGSTV. The helical transmembrane segment at 300–323 threads the bilayer; that stretch reads FNVLKGVLEVIIGVVTGLVLGFFI. Topologically, residues 324–338 are cytoplasmic; that stretch reads QYFPSSDQDNLVWKR. A helical membrane pass occupies residues 339 to 356; it reads AFLVLGLSVLAVFSSTYF. The Extracellular segment spans residues 357–360; that stretch reads GFPG. The helical transmembrane segment at 361-372 threads the bilayer; it reads SGGLCTLVTAFL. Residues 373–389 lie on the Cytoplasmic side of the membrane; that stretch reads AGRGWASTKTDVEKVIA. Residues 390–410 traverse the membrane as a helical segment; that stretch reads VAWDIFQPLLFGLIGAEVLIT. Over 411-416 the chain is Extracellular; it reads ALRPET. A helical membrane pass occupies residues 417-439; sequence IGLCVATLGIAVLIRILVTYLMV. The Cytoplasmic portion of the chain corresponds to 440–460; it reads CFAGFNIKEKIFISFAWLPKA. Residues 461-472 traverse the membrane as a helical segment; the sequence is TVQAAIGSVALD. Topologically, residues 473 to 485 are extracellular; that stretch reads TARSHGEKQLEGY. The chain crosses the membrane as a helical span at residues 486–508; the sequence is GMDVLTVAFLSIIITAPVGSLLI. At 509–535 the chain is on the cytoplasmic side; the sequence is GLLGPRLLQKAEQNKDEEDQGETSIQV.

This sequence belongs to the monovalent cation:proton antiporter 1 (CPA1) transporter (TC 2.A.36) family. In terms of assembly, homodimer; dimerization is essential for SLC9B2 activity. Lipids seem to play a role in the stabilization of the dimerization subdomain.

The protein resides in the cell membrane. It is found in the mitochondrion membrane. Its subcellular location is the endosome membrane. It localises to the recycling endosome membrane. The protein localises to the lysosome membrane. The protein resides in the cytoplasmic vesicle. It is found in the secretory vesicle. Its subcellular location is the synaptic vesicle membrane. It localises to the cell projection. The protein localises to the cilium. The protein resides in the flagellum membrane. It is found in the basolateral cell membrane. Its subcellular location is the apical cell membrane. The catalysed reaction is Li(+)(out) + H(+)(in) = Li(+)(in) + H(+)(out). It catalyses the reaction Li(+)(in) + Na(+)(out) = Li(+)(out) + Na(+)(in). The enzyme catalyses Na(+)(in) + H(+)(out) = Na(+)(out) + H(+)(in). Allosterically inhibited by the N-terminal domain. Inhibited by phloretin. Its function is as follows. Electroneutral Na(+) Li(+)/H(+) antiporter that extrudes Na(+) or Li(+) in exchange for external protons across the membrane. Uses the proton gradient/membrane potential to extrude sodium. Contributes to the regulation of intracellular pH and sodium homeostasis. Also able to mediate Na(+)/Li(+) antiporter activity in kidney. May play a physiological role in renal tubular function and blood pressure homeostasis. Plays an important role for insulin secretion and clathrin-mediated endocytosis in beta-cells. Involved in sperm motility and fertility. It is controversial whether SLC9B2 plays a role in osteoclast differentiation or not. The polypeptide is Sodium/hydrogen exchanger 9B2 (SLC9B2) (Bison bison bison (North American plains bison)).